Reading from the N-terminus, the 685-residue chain is DNA ligase (685 aa).

Residues 47–51 (DSEYD), 96–97 (SL), and glutamate 125 each bind NAD(+). Residue lysine 127 is the N6-AMP-lysine intermediate of the active site. Arginine 148, glutamate 185, lysine 304, and lysine 328 together coordinate NAD(+). Zn(2+) is bound by residues cysteine 422, cysteine 425, cysteine 440, and cysteine 446. Positions 605–685 (AEAQPLKGQT…ELLALLAANA (81 aa)) constitute a BRCT domain.

Belongs to the NAD-dependent DNA ligase family. LigA subfamily. The cofactor is Mg(2+). It depends on Mn(2+) as a cofactor.

It carries out the reaction NAD(+) + (deoxyribonucleotide)n-3'-hydroxyl + 5'-phospho-(deoxyribonucleotide)m = (deoxyribonucleotide)n+m + AMP + beta-nicotinamide D-nucleotide.. In terms of biological role, DNA ligase that catalyzes the formation of phosphodiester linkages between 5'-phosphoryl and 3'-hydroxyl groups in double-stranded DNA using NAD as a coenzyme and as the energy source for the reaction. It is essential for DNA replication and repair of damaged DNA. This Shewanella baltica (strain OS223) protein is DNA ligase.